The primary structure comprises 664 residues: MAGLSNSQIPDGEFTAVVYRLIRDSRYSEAVQLLSAELQRSSRSRAGLSLLAYCYYRLQEFELAAECYEQLSQMHPELEQYRLYQAQALYKACLYPEATRVAFLLDNPTFYSRVLRLQAAIKYSEGDLPGARSLVEQLLSGEAGEDSGGENDPDGLVNMGCLLYKEGHYEAACSKFFAALQASGYQPDVSYNLALACYSNRHYAPALKHIANIIERGIRQHPELGVGMTTEGIDVRSVGNTVVLHQTALVEAFNLKAAIEYQLRNYEAAQEALTDMPPRAEEELDPVTLHNQALMNMDAKPTEGFEKLQFLLQQNPFPPETFGNLLLLYCKYEYFDLAADVLAENAHLTYKFLTPYLYDFLDAMITCQTAPEEAFIKLDGLAGMLTEQLRRLTKQVQEARHNRDDEVVIKAVNEYDETLEKYIPVLMAQAKIYWNLENYPMVEKIFRKSVEFCNDHDVWKLNVAHVLFMQENKYKEAIGFYEPIVKKNYDNILSVSAIVLANLCVSYIMTSQNEEAEELMRKIEKEEEQLSYGDPDKKIYHLCIVNLVIGTLYCAKGNYDFGISRVIKSLEPYHKKLGTDTWYYAKRCFLSLLENMSKHTIMLRDSVIQECVQFLEHCEIFGRNIPAVIEQPLEEERMHIGKNTVTYESRQLKALIYEIIGWNM.

7 TPR repeats span residues 11–44, 45–78, 153–186, 188–220, 395–423, 424–456, and 458–491; these read DGEF…SSRS, RAGL…HPEL, PDGL…SGYQ, DVSY…GIRQ, QVQE…EKYI, PVLM…CNDH, and VWKL…NYDN. Residues 507-534 adopt a coiled-coil conformation; the sequence is YIMTSQNEEAEELMRKIEKEEEQLSYGD. Residues 543–576 form a TPR 8 repeat; it reads CIVNLVIGTLYCAKGNYDFGISRVIKSLEPYHKK.

Belongs to the TTC30/dfy-1/fleer family. Interacts wit the IFT B complex component IFT52.

Its subcellular location is the cell projection. It is found in the cilium. Its function is as follows. Required for polyglutamylation of axonemal tubulin. Plays a role in anterograde intraflagellar transport (IFT), the process by which cilia precursors are transported from the base of the cilium to the site of their incorporation at the tip. This Mus musculus (Mouse) protein is Intraflagellar transport protein 70A2 (Ift70a2).